The primary structure comprises 345 residues: N-acetyl-gamma-glutamyl-phosphate reductase (345 aa).

Cysteine 153 is a catalytic residue.

Belongs to the NAGSA dehydrogenase family. Type 1 subfamily.

It is found in the cytoplasm. It catalyses the reaction N-acetyl-L-glutamate 5-semialdehyde + phosphate + NADP(+) = N-acetyl-L-glutamyl 5-phosphate + NADPH + H(+). It functions in the pathway amino-acid biosynthesis; L-arginine biosynthesis; N(2)-acetyl-L-ornithine from L-glutamate: step 3/4. Functionally, catalyzes the NADPH-dependent reduction of N-acetyl-5-glutamyl phosphate to yield N-acetyl-L-glutamate 5-semialdehyde. The polypeptide is N-acetyl-gamma-glutamyl-phosphate reductase (Methylacidiphilum infernorum (isolate V4) (Methylokorus infernorum (strain V4))).